A 527-amino-acid chain; its full sequence is Beta-glucosidase 19 (527 aa).

An N-terminal signal peptide occupies residues 1–21 (MKIPLLGLLLLISLVGSPTRA). Positions 52 and 155 each coordinate a beta-D-glucoside. An N-linked (GlcNAc...) asparagine glycan is attached at Asn-183. Position 200–201 (200–201 (NE)) interacts with a beta-D-glucoside. Glu-201 (proton donor) is an active-site residue. The cysteines at positions 220 and 231 are disulfide-linked. A beta-D-glucoside contacts are provided by Tyr-345 and Glu-418. Residue Glu-418 is the Nucleophile of the active site. N-linked (GlcNAc...) asparagine glycosylation is present at Asn-462. Residues Trp-469, 476–477 (EW), and Phe-485 contribute to the a beta-D-glucoside site. N-linked (GlcNAc...) asparagine glycosylation is present at Asn-495. A Prevents secretion from ER motif is present at residues 524–527 (HEEL).

This sequence belongs to the glycosyl hydrolase 1 family.

The protein localises to the endoplasmic reticulum lumen. The catalysed reaction is Hydrolysis of terminal, non-reducing beta-D-glucosyl residues with release of beta-D-glucose.. The chain is Beta-glucosidase 19 from Arabidopsis thaliana (Mouse-ear cress).